We begin with the raw amino-acid sequence, 377 residues long: UPF0425 pyridoxal phosphate-dependent protein MTH_1914 (377 aa).

N6-(pyridoxal phosphate)lysine is present on Lys-207.

It belongs to the UPF0425 family. Pyridoxal 5'-phosphate serves as cofactor.

The sequence is that of UPF0425 pyridoxal phosphate-dependent protein MTH_1914 from Methanothermobacter thermautotrophicus (strain ATCC 29096 / DSM 1053 / JCM 10044 / NBRC 100330 / Delta H) (Methanobacterium thermoautotrophicum).